A 254-amino-acid chain; its full sequence is Polysaccharide deacetylase domain-containing protein ECU11_0510 (254 aa).

The 185-residue stretch at 26–210 (GMIAINFVDG…IGKDKGYRFV (185 aa)) folds into the NodB homology domain.

The chain is Polysaccharide deacetylase domain-containing protein ECU11_0510 from Encephalitozoon cuniculi (strain GB-M1) (Microsporidian parasite).